The sequence spans 343 residues: Leucine-rich repeat-containing protein 39 (343 aa).

LRR repeat units lie at residues 64-87 (EEGR…LVQL), 88-110 (SQIQ…ISSF), 111-133 (QSLI…IGKL), 134-156 (TRLR…LGCC), 158-180 (NLEK…LSNL), 181-203 (KKLS…VVNL), 204-226 (PSLE…IHRM), 228-249 (KLHT…ISRM), 250-274 (KSLD…GMSN), and 275-295 (LRFV…PDLN).

It localises to the cytoplasm. The protein localises to the myofibril. It is found in the sarcomere. The protein resides in the m line. In terms of biological role, component of the sarcomeric M-band which plays a role in myocyte response to biomechanical stress. May regulate expression of other M-band proteins via an SRF-dependent pathway. Important for normal contractile function in heart. The chain is Leucine-rich repeat-containing protein 39 from Danio rerio (Zebrafish).